The primary structure comprises 172 residues: Keratin, high-sulfur matrix protein, B2A (172 aa).

Alanine 2 bears the N-acetylalanine mark. Repeats lie at residues 27 to 36 (PTCCQTSCCQ), 37 to 46 (PTSIQTSCCQ), 47 to 56 (PISIQTSCCQ), 57 to 66 (PTSIQTSCCQ), and 67 to 76 (PTCLQTSGCE).

The keratin products of mammalian epidermal derivatives such as wool and hair consist of microfibrils embedded in a rigid matrix of other proteins. The matrix proteins include the high-sulfur and high-tyrosine keratins, having molecular weights of 6-20 kDa, whereas the microfibrils contain the larger, low-sulfur keratins (40-56 kDa). This chain is Keratin, high-sulfur matrix protein, B2A, found in Ovis aries (Sheep).